The chain runs to 82 residues: Cytochrome b559 subunit alpha (82 aa).

A helical membrane pass occupies residues 21–35 (VIHSVTIPSLFIAGW). A heme-binding site is contributed by histidine 23.

This sequence belongs to the PsbE/PsbF family. In terms of assembly, heterodimer of an alpha subunit and a beta subunit. PSII is composed of 1 copy each of membrane proteins PsbA, PsbB, PsbC, PsbD, PsbE, PsbF, PsbH, PsbI, PsbJ, PsbK, PsbL, PsbM, PsbT, PsbX, PsbY, PsbZ, Psb30/Ycf12, at least 3 peripheral proteins of the oxygen-evolving complex and a large number of cofactors. It forms dimeric complexes. Heme b serves as cofactor.

It localises to the plastid. It is found in the chloroplast thylakoid membrane. In terms of biological role, this b-type cytochrome is tightly associated with the reaction center of photosystem II (PSII). PSII is a light-driven water:plastoquinone oxidoreductase that uses light energy to abstract electrons from H(2)O, generating O(2) and a proton gradient subsequently used for ATP formation. It consists of a core antenna complex that captures photons, and an electron transfer chain that converts photonic excitation into a charge separation. The sequence is that of Cytochrome b559 subunit alpha from Ostreococcus tauri.